A 95-amino-acid polypeptide reads, in one-letter code: Co-chaperonin GroES (95 aa).

It belongs to the GroES chaperonin family. As to quaternary structure, heptamer of 7 subunits arranged in a ring. Interacts with the chaperonin GroEL.

It localises to the cytoplasm. Together with the chaperonin GroEL, plays an essential role in assisting protein folding. The GroEL-GroES system forms a nano-cage that allows encapsulation of the non-native substrate proteins and provides a physical environment optimized to promote and accelerate protein folding. GroES binds to the apical surface of the GroEL ring, thereby capping the opening of the GroEL channel. This Streptococcus thermophilus (strain ATCC BAA-491 / LMD-9) protein is Co-chaperonin GroES.